The sequence spans 1206 residues: Cilia- and flagella-associated protein 157 (1206 aa).

Disordered regions lie at residues 26-52 (GGGG…GRDL), 79-109 (RAEQ…QQAP), 125-173 (EATC…RGPL), and 327-405 (GSGK…EEDW). 3 stretches are compositionally biased toward low complexity: residues 88–109 (GRPQ…QQAP), 156–173 (AKAV…RGPL), and 385–397 (QQLG…QPGG). Coiled-coil stretches lie at residues 634–732 (TDEL…KTKD), 799–833 (TEKL…LARR), and 876–903 (LHLA…KTAE). Disordered regions lie at residues 936 to 990 (TTTN…DELS), 1011 to 1072 (LSHG…GATS), and 1168 to 1206 (PWGK…SLKV). 2 stretches are compositionally biased toward low complexity: residues 951–973 (AGAD…SSSA) and 1014–1035 (GPLS…ALAG). Gly residues-rich tracts occupy residues 1037-1046 (WGPGSPGGSR) and 1058-1067 (SAGGMGGPQG). 2 stretches are compositionally biased toward polar residues: residues 1175–1184 (QQPLTTTKHS) and 1193–1206 (GPSN…SLKV).

Belongs to the CFAP157 family.

The protein localises to the cell projection. Its subcellular location is the cilium. The protein resides in the flagellum. The sequence is that of Cilia- and flagella-associated protein 157 from Chlamydomonas reinhardtii (Chlamydomonas smithii).